Consider the following 284-residue polypeptide: Nucleotide-binding protein PputGB1_0956 (284 aa).

ATP is bound at residue 8 to 15 (GRSGSGKS). 60–63 (DARN) contacts GTP.

This sequence belongs to the RapZ-like family.

Its function is as follows. Displays ATPase and GTPase activities. The polypeptide is Nucleotide-binding protein PputGB1_0956 (Pseudomonas putida (strain GB-1)).